Reading from the N-terminus, the 335-residue chain is Glycerol-3-phosphate dehydrogenase [NAD(P)+] (335 aa).

NADPH contacts are provided by serine 12, tryptophan 13, and lysine 107. Sn-glycerol 3-phosphate is bound by residues lysine 107, glycine 138, and serine 140. Alanine 142 contributes to the NADPH binding site. Residues lysine 193, aspartate 246, serine 256, arginine 257, and asparagine 258 each contribute to the sn-glycerol 3-phosphate site. The active-site Proton acceptor is lysine 193. NADPH is bound at residue arginine 257. NADPH contacts are provided by valine 281 and glutamate 283.

The protein belongs to the NAD-dependent glycerol-3-phosphate dehydrogenase family.

The protein localises to the cytoplasm. It carries out the reaction sn-glycerol 3-phosphate + NAD(+) = dihydroxyacetone phosphate + NADH + H(+). The enzyme catalyses sn-glycerol 3-phosphate + NADP(+) = dihydroxyacetone phosphate + NADPH + H(+). It functions in the pathway membrane lipid metabolism; glycerophospholipid metabolism. Catalyzes the reduction of the glycolytic intermediate dihydroxyacetone phosphate (DHAP) to sn-glycerol 3-phosphate (G3P), the key precursor for phospholipid synthesis. This is Glycerol-3-phosphate dehydrogenase [NAD(P)+] from Citrifermentans bemidjiense (strain ATCC BAA-1014 / DSM 16622 / JCM 12645 / Bem) (Geobacter bemidjiensis).